The sequence spans 369 residues: Thyroid hormone receptor beta (369 aa).

Positions 1 to 14 (MSGYIPSYLDKDEL) are modulating. C15, C18, C32, C35, C53, C59, C69, and C72 together coordinate Zn(2+). 2 NR C4-type zinc fingers span residues 15–35 (CVVC…CEGC) and 53–77 (CKYE…FKKC). The segment at residues 15–89 (CVVCGDKATG…VGMATDLVLD (75 aa)) is a DNA-binding region (nuclear receptor). Positions 125–369 (EEWELIKIVT…PPLFLEVFED (245 aa)) constitute an NR LBD domain. The 3,3',5-triiodo-L-thyronine site is built by R190, N239, and H343. Residues R190, N239, and H343 each contribute to the L-thyroxine site.

Belongs to the nuclear hormone receptor family. NR1 subfamily.

It is found in the nucleus. In terms of biological role, nuclear hormone receptor that can act as a repressor or activator of transcription. High affinity receptor for thyroid hormones, including triiodothyronine and thyroxine. The polypeptide is Thyroid hormone receptor beta (THRB) (Cairina moschata (Muscovy duck)).